A 1131-amino-acid chain; its full sequence is Chitin synthase 1 (1131 aa).

Residues 1–20 show a composition bias toward basic and acidic residues; it reads MSDQNNRSRNEYHSNRKNEP. A disordered region spans residues 1–22; the sequence is MSDQNNRSRNEYHSNRKNEPSY. A phosphoserine mark is found at serine 34, serine 35, serine 270, serine 299, and serine 318. A disordered region spans residues 282-305; it reads YLHDDSRPVNDGKEELDSVKSGYS. The residue at position 328 (threonine 328) is a Phosphothreonine. Serine 358 carries the post-translational modification Phosphoserine. The next 7 helical transmembrane spans lie at 795–815, 833–853, 866–886, 914–934, 942–962, 1042–1062, and 1101–1121; these read FFYL…FFLV, VLSV…FILS, VLTC…SIFM, IVIS…IYLQ, FIQY…YAFC, LVII…LETG, and ILWL…IYMI.

Belongs to the chitin synthase family.

It localises to the cell membrane. It carries out the reaction [(1-&gt;4)-N-acetyl-beta-D-glucosaminyl](n) + UDP-N-acetyl-alpha-D-glucosamine = [(1-&gt;4)-N-acetyl-beta-D-glucosaminyl](n+1) + UDP + H(+). Requires proteolytic activation. Its function is as follows. Polymerizes chitin, a structural polymer of the cell wall and septum, by transferring the sugar moiety of UDP-GlcNAc to the non-reducing end of the growing chitin polymer. Required for mitotic division septum formation during adverse conditions. The chain is Chitin synthase 1 (CHS1) from Saccharomyces cerevisiae (strain ATCC 204508 / S288c) (Baker's yeast).